Reading from the N-terminus, the 448-residue chain is Late embryogenesis abundant protein ECP63 (448 aa).

Composition is skewed to basic and acidic residues over residues 282–326 and 334–354; these read TEEA…EEAG and QKTR…KDSA. 2 disordered regions span residues 282 to 360 and 411 to 448; these read TEEA…RGNE and SKPG…KGKL. A coiled-coil region spans residues 297 to 331; the sequence is KENMEKAGEVTRQKMEEMRLEGKELKEEAGAKAQE. Residues 420–432 show a composition bias toward polar residues; that stretch reads LKASDQMTGQTFN. The segment covering 435 to 448 has biased composition (basic and acidic residues); the sequence is GRMDDDARKDKGKL.

It belongs to the LEA type 4 family. Expressed in mature seeds.

In terms of biological role, may be involved in the BHLH109-mediated regulation of somatic embryogenesis. The chain is Late embryogenesis abundant protein ECP63 from Arabidopsis thaliana (Mouse-ear cress).